The chain runs to 713 residues: Bifunctional protein gal10 (713 aa).

The galactowaldenase stretch occupies residues 1 to 350; that stretch reads MAVQDEYILV…TIENPFGFQI (350 aa). Position 7–38 (7–38) interacts with NAD(+); it reads YILVTGGAGYIGSHTVIELINHGYKVIIVDNL. A mutarotase region spans residues 351-713; the sequence is DNYKWKLFNT…SASYNSGEYY (363 aa). The active-site For mutarotase activity is His-532.

The protein in the N-terminal section; belongs to the NAD(P)-dependent epimerase/dehydratase family. This sequence in the C-terminal section; belongs to the aldose epimerase family. It depends on NAD(+) as a cofactor.

It carries out the reaction UDP-alpha-D-glucose = UDP-alpha-D-galactose. The catalysed reaction is alpha-D-glucose = beta-D-glucose. Its pathway is carbohydrate metabolism; galactose metabolism. It participates in carbohydrate metabolism; hexose metabolism. Functionally, mutarotase converts alpha-aldose to the beta-anomer. It is active on D-glucose, L-arabinose, D-xylose, D-galactose, maltose and lactose. In Schizosaccharomyces pombe (strain 972 / ATCC 24843) (Fission yeast), this protein is Bifunctional protein gal10 (gal10).